Consider the following 133-residue polypeptide: Ribulose bisphosphate carboxylase small subunit (133 aa).

It belongs to the RuBisCO small chain family. As to quaternary structure, heterohexadecamer of 8 large and 8 small subunits.

Its function is as follows. RuBisCO catalyzes two reactions: the carboxylation of D-ribulose 1,5-bisphosphate, the primary event in carbon dioxide fixation, as well as the oxidative fragmentation of the pentose substrate. Both reactions occur simultaneously and in competition at the same active site. Although the small subunit is not catalytic it is essential for maximal activity. This Xanthobacter flavus protein is Ribulose bisphosphate carboxylase small subunit.